The sequence spans 503 residues: Glycerol kinase (503 aa).

An ADP-binding site is contributed by Thr-14. ATP contacts are provided by Thr-14, Thr-15, and Ser-16. A sn-glycerol 3-phosphate-binding site is contributed by Thr-14. Residue Arg-18 coordinates ADP. Sn-glycerol 3-phosphate is bound by residues Arg-84, Glu-85, Tyr-136, and Asp-246. Glycerol contacts are provided by Arg-84, Glu-85, Tyr-136, Asp-246, and Gln-247. Residues Thr-268 and Gly-311 each coordinate ADP. ATP-binding residues include Thr-268, Gly-311, Gln-315, and Gly-412. Gly-412 and Asn-416 together coordinate ADP.

This sequence belongs to the FGGY kinase family.

The catalysed reaction is glycerol + ATP = sn-glycerol 3-phosphate + ADP + H(+). It participates in polyol metabolism; glycerol degradation via glycerol kinase pathway; sn-glycerol 3-phosphate from glycerol: step 1/1. Inhibited by fructose 1,6-bisphosphate (FBP). Key enzyme in the regulation of glycerol uptake and metabolism. Catalyzes the phosphorylation of glycerol to yield sn-glycerol 3-phosphate. The sequence is that of Glycerol kinase from Haemophilus influenzae (strain PittEE).